A 453-amino-acid polypeptide reads, in one-letter code: Tubulin gamma chain (453 aa).

A GTP-binding site is contributed by Ala-142–Gly-148.

This sequence belongs to the tubulin family.

It is found in the cytoplasm. The protein localises to the cytoskeleton. It localises to the microtubule organizing center. The protein resides in the spindle pole body. Tubulin is the major constituent of microtubules. The gamma chain is found at microtubule organizing centers (MTOC) such as the spindle poles or the centrosome, suggesting that it is involved in the minus-end nucleation of microtubule assembly. The sequence is that of Tubulin gamma chain (TUB4) from Coprinopsis cinerea (strain Okayama-7 / 130 / ATCC MYA-4618 / FGSC 9003) (Inky cap fungus).